The chain runs to 450 residues: Nicotinamide phosphoribosyltransferase (450 aa).

A diphosphate-binding site is contributed by Arg210. Asp233 is a beta-nicotinamide D-ribonucleotide binding site. Diphosphate-binding residues include His249 and Arg310. Beta-nicotinamide D-ribonucleotide is bound by residues 310 to 312 (RAD), 364 to 365 (GD), and Arg403.

It belongs to the NAPRTase family.

It catalyses the reaction beta-nicotinamide D-ribonucleotide + diphosphate = 5-phospho-alpha-D-ribose 1-diphosphate + nicotinamide + H(+). It functions in the pathway cofactor biosynthesis; NAD(+) biosynthesis; nicotinamide D-ribonucleotide from 5-phospho-alpha-D-ribose 1-diphosphate and nicotinamide: step 1/1. Its function is as follows. Catalyzes the condensation of nicotinamide with 5-phosphoribosyl-1-pyrophosphate to yield nicotinamide mononucleotide, an intermediate in the biosynthesis of NAD. This Mycoplasma genitalium (strain ATCC 33530 / DSM 19775 / NCTC 10195 / G37) (Mycoplasmoides genitalium) protein is Nicotinamide phosphoribosyltransferase.